A 119-amino-acid chain; its full sequence is Holo-[acyl-carrier-protein] synthase (119 aa).

Mg(2+) contacts are provided by D8 and E59.

The protein belongs to the P-Pant transferase superfamily. AcpS family. It depends on Mg(2+) as a cofactor.

The protein resides in the cytoplasm. The enzyme catalyses apo-[ACP] + CoA = holo-[ACP] + adenosine 3',5'-bisphosphate + H(+). Functionally, transfers the 4'-phosphopantetheine moiety from coenzyme A to a Ser of acyl-carrier-protein. This is Holo-[acyl-carrier-protein] synthase from Lactococcus lactis subsp. lactis (strain IL1403) (Streptococcus lactis).